An 840-amino-acid chain; its full sequence is UPF0508 protein SCY_2952 (840 aa).

This sequence belongs to the UPF0508 family.

The sequence is that of UPF0508 protein SCY_2952 from Saccharomyces cerevisiae (strain YJM789) (Baker's yeast).